A 107-amino-acid polypeptide reads, in one-letter code: UPF0145 protein YbjQ (107 aa).

It belongs to the UPF0145 family.

This Escherichia coli (strain SMS-3-5 / SECEC) protein is UPF0145 protein YbjQ.